The primary structure comprises 499 residues: Glycerol kinase (499 aa).

Thr12 lines the ADP pocket. ATP is bound by residues Thr12, Thr13, and Ser14. Thr12 provides a ligand contact to sn-glycerol 3-phosphate. ADP is bound at residue Arg16. The sn-glycerol 3-phosphate site is built by Arg82, Glu83, Tyr134, and Asp245. Glycerol-binding residues include Arg82, Glu83, Tyr134, Asp245, and Gln246. Thr267 and Gly311 together coordinate ADP. Positions 267, 311, 315, and 412 each coordinate ATP. ADP contacts are provided by Gly412 and Asn416.

This sequence belongs to the FGGY kinase family.

The enzyme catalyses glycerol + ATP = sn-glycerol 3-phosphate + ADP + H(+). It functions in the pathway polyol metabolism; glycerol degradation via glycerol kinase pathway; sn-glycerol 3-phosphate from glycerol: step 1/1. Its activity is regulated as follows. Inhibited by fructose 1,6-bisphosphate (FBP). In terms of biological role, key enzyme in the regulation of glycerol uptake and metabolism. Catalyzes the phosphorylation of glycerol to yield sn-glycerol 3-phosphate. The chain is Glycerol kinase from Acidiphilium cryptum (strain JF-5).